The chain runs to 169 residues: Aspartic protease inhibitor 3 (169 aa).

Asn1 carries an N-linked (GlcNAc...) asparagine glycan. Cystine bridges form between Cys30-Cys75 and Cys124-Cys134.

The protein belongs to the protease inhibitor I3 (leguminous Kunitz-type inhibitor) family.

The protein resides in the vacuole. In terms of biological role, inhibitor of cathepsin D (aspartic protease). May also inhibit trypsin and chymotrypsin (serine proteases). Protects the plant by inhibiting proteases of invading organisms. This is Aspartic protease inhibitor 3 from Solanum tuberosum (Potato).